The following is a 495-amino-acid chain: ATP synthase subunit beta, chloroplastic (495 aa).

172–179 (GGAGVGKT) lines the ATP pocket.

It belongs to the ATPase alpha/beta chains family. F-type ATPases have 2 components, CF(1) - the catalytic core - and CF(0) - the membrane proton channel. CF(1) has five subunits: alpha(3), beta(3), gamma(1), delta(1), epsilon(1). CF(0) has four main subunits: a(1), b(1), b'(1) and c(9-12).

It is found in the plastid. The protein localises to the chloroplast thylakoid membrane. It catalyses the reaction ATP + H2O + 4 H(+)(in) = ADP + phosphate + 5 H(+)(out). Produces ATP from ADP in the presence of a proton gradient across the membrane. The catalytic sites are hosted primarily by the beta subunits. The polypeptide is ATP synthase subunit beta, chloroplastic (Pteridium aquilinum (Bracken fern)).